The chain runs to 286 residues: 2-dehydro-3-deoxyphosphooctonate aldolase (286 aa).

Belongs to the KdsA family.

It is found in the cytoplasm. It carries out the reaction D-arabinose 5-phosphate + phosphoenolpyruvate + H2O = 3-deoxy-alpha-D-manno-2-octulosonate-8-phosphate + phosphate. It functions in the pathway carbohydrate biosynthesis; 3-deoxy-D-manno-octulosonate biosynthesis; 3-deoxy-D-manno-octulosonate from D-ribulose 5-phosphate: step 2/3. It participates in bacterial outer membrane biogenesis; lipopolysaccharide biosynthesis. The chain is 2-dehydro-3-deoxyphosphooctonate aldolase from Haemophilus ducreyi (strain 35000HP / ATCC 700724).